We begin with the raw amino-acid sequence, 864 residues long: Leucine--tRNA ligase (864 aa).

The 'HIGH' region motif lies at 40–51 (PYPSGAGLHVGH). A 'KMSKS' region motif is present at residues 636-640 (KMSKS). Residue K639 coordinates ATP.

It belongs to the class-I aminoacyl-tRNA synthetase family.

It localises to the cytoplasm. It catalyses the reaction tRNA(Leu) + L-leucine + ATP = L-leucyl-tRNA(Leu) + AMP + diphosphate. The sequence is that of Leucine--tRNA ligase from Leptospira borgpetersenii serovar Hardjo-bovis (strain JB197).